An 875-amino-acid polypeptide reads, in one-letter code: Metal transporter CNNM2 (875 aa).

Residues 1–250 (MIGCGACEPE…TKMIVGEEKK (250 aa)) are Extracellular-facing. N-linked (GlcNAc...) asparagine glycosylation occurs at Asn-112. The segment at 121-149 (TEHERRRHTPSERGLGGPAPPEPDSGPQR) is disordered. A helical membrane pass occupies residues 251-271 (FLLPFWLQVIFISLLLCLSGM). The region spanning 251–431 (FLLPFWLQVI…DPYNDLVKEE (181 aa)) is the CNNM transmembrane domain. Over 272 to 313 (FSGLNLGLMALDPMELRIVQNCGTEKEKNYAKRIEPVRRQGN) the chain is Cytoplasmic. An intramembrane region (helical) is located at residues 314 to 334 (YLLCSLLLGNVLVNTTLTILL). Over 335–338 (DDIA) the chain is Cytoplasmic. The helical transmembrane segment at 339 to 359 (GSGLVAVVVSTIGIVIFGEIV) threads the bilayer. The Extracellular portion of the chain corresponds to 360 to 368 (PQAICSRHG). Residues 369–389 (LAVGANTIFLTKFFMMMTFPA) traverse the membrane as a helical segment. At 390–875 (SYPVSKLLDC…NHSLHSEGAI (486 aa)) the chain is on the cytoplasmic side. CBS domains lie at 450-511 (MTPL…CTPL) and 518-584 (YNHP…ILDE). The segment at 741 to 763 (AGSPGENKSPPRPCGLNHSDSLS) is disordered. Ser-761 carries the phosphoserine modification.

This sequence belongs to the ACDP family. As to quaternary structure, isoform 1 and isoform 2 may interact with each other. In terms of processing, the N-terminus is cleaved within the endoplasmic reticulum. The signal peptidase complex seems to be involved in the processing, but the exact cleavage site has not been identified. In terms of tissue distribution, widely expressed, with highest levels in kidney, lung, spleen and testis. In the kidney, predominantly expressed in the distal convoluted tubule and, at lower levels, in the connecting tubule (at protein level).

The protein localises to the cell membrane. Its function is as follows. Divalent metal cation transporter. Mediates transport of divalent metal cations in an order of Mg(2+) &gt; Co(2+) &gt; Mn(2+) &gt; Sr(2+) &gt; Ba(2+) &gt; Cu(2+) &gt; Fe(2+). The sequence is that of Metal transporter CNNM2 (Cnnm2) from Mus musculus (Mouse).